Here is a 552-residue protein sequence, read N- to C-terminus: Phosphoglucomutase (552 aa).

Catalysis depends on Ser-143, which acts as the Phosphoserine intermediate. Residues Ser-143, Asp-295, Asp-297, and Asp-299 each contribute to the Mg(2+) site.

Belongs to the phosphohexose mutase family. Requires Mg(2+) as cofactor.

It carries out the reaction alpha-D-glucose 1-phosphate = alpha-D-glucose 6-phosphate. It functions in the pathway glycolipid metabolism; diglucosyl-diacylglycerol biosynthesis. Its function is as follows. Catalyzes the interconversion between glucose-6-phosphate and alpha-glucose-1-phosphate. This is the first step in the biosynthesis of diglucosyl-diacylglycerol (Glc2-DAG), i.e. the predominant glycolipid found in the S.aureus membrane, which is also used as a membrane anchor for lipoteichoic acid (LTA). This is Phosphoglucomutase (pgcA) from Staphylococcus aureus (strain bovine RF122 / ET3-1).